The sequence spans 750 residues: Tyrosine-protein phosphatase 2 (750 aa).

The interval 1-20 is disordered; it reads MDRIAQQYRNGKRDNNGNRM. A Phosphoserine modification is found at Ser258. Disordered stretches follow at residues 327–348 and 425–450; these read LHQK…SKLY and VKLP…DKSY. Polar residues predominate over residues 330–348; the sequence is KQLSQKQRGPQSTDDSKLY. The 355-residue stretch at 383 to 737 folds into the Tyrosine-protein phosphatase domain; the sequence is SPSPLSSDDT…IACYEALLNY (355 aa). The residue at position 430 (Ser430) is a Phosphoserine. Cys666 functions as the Phosphocysteine intermediate in the catalytic mechanism.

The protein belongs to the protein-tyrosine phosphatase family. Non-receptor class subfamily. Interacts with HOG1.

Its subcellular location is the cytoplasm. It is found in the nucleus. It carries out the reaction O-phospho-L-tyrosyl-[protein] + H2O = L-tyrosyl-[protein] + phosphate. Functionally, major phosphatase responsible with PTP3 for tyrosine dephosphorylation of MAP kinase HOG1 to inactivate its activity. May also be involved in the regulation of MAP kinase FUS3. May be implicated in the ubiquitin-mediated protein degradation. This chain is Tyrosine-protein phosphatase 2 (PTP2), found in Saccharomyces cerevisiae (strain ATCC 204508 / S288c) (Baker's yeast).